A 249-amino-acid polypeptide reads, in one-letter code: tRNA pseudouridine synthase A (249 aa).

Asp-52 acts as the Nucleophile in catalysis. Tyr-110 contributes to the substrate binding site.

This sequence belongs to the tRNA pseudouridine synthase TruA family. In terms of assembly, homodimer.

It catalyses the reaction uridine(38/39/40) in tRNA = pseudouridine(38/39/40) in tRNA. Functionally, formation of pseudouridine at positions 38, 39 and 40 in the anticodon stem and loop of transfer RNAs. In Syntrophomonas wolfei subsp. wolfei (strain DSM 2245B / Goettingen), this protein is tRNA pseudouridine synthase A.